Consider the following 185-residue polypeptide: Prenylated Rab acceptor protein 1 (185 aa).

Residues methionine 1–tyrosine 78 are Cytoplasmic-facing. The interval alanine 30 to phenylalanine 54 is required for interaction with prenylated RAB3A and VAMP2. The next 2 membrane-spanning stretches (helical) occupy residues valine 79–proline 94 and methionine 95–leucine 112. The Cytoplasmic segment spans residues arginine 113–glutamine 131. 2 helical membrane passes run tyrosine 132–alanine 148 and glycine 149–serine 165. The tract at residues serine 165–valine 185 is required for interaction with GDI1. Residues histidine 166–valine 185 are Cytoplasmic-facing. Residues alanine 175–valine 185 form a required for interaction with prenylated RAB3A and VAMP2 region. The interval alanine 175–valine 185 is homodimerization.

This sequence belongs to the PRA1 family. In terms of assembly, homodimers. Interacts specifically with both prenylated Rab proteins (including RAB3A and RAB1), and VAMP2 (synaptobrevin-2), in an exclusive way. Interacts with NDRG1. Interacts with free GDI1 in the absence of Rab proteins. Also interacts with PCLO. Ubiquitous.

It is found in the cell membrane. The protein localises to the cytoplasm. It localises to the golgi apparatus. The protein resides in the cytoplasmic vesicle. Its subcellular location is the secretory vesicle. It is found in the synaptic vesicle. Its function is as follows. General Rab protein regulator required for vesicle formation from the Golgi complex. May control vesicle docking and fusion by mediating the action of Rab GTPases to the SNARE complexes. In addition it inhibits the removal of Rab GTPases from the membrane by GDI1. The chain is Prenylated Rab acceptor protein 1 (Rabac1) from Rattus norvegicus (Rat).